Here is a 210-residue protein sequence, read N- to C-terminus: Thymidylate kinase (210 aa).

Position 10 to 17 (10 to 17) interacts with ATP; sequence GPEGAGKS.

It belongs to the thymidylate kinase family.

It catalyses the reaction dTMP + ATP = dTDP + ADP. In terms of biological role, phosphorylation of dTMP to form dTDP in both de novo and salvage pathways of dTTP synthesis. The protein is Thymidylate kinase of Pseudomonas syringae pv. tomato (strain ATCC BAA-871 / DC3000).